The following is a 546-amino-acid chain: Sodium/hydrogen exchanger 2 (546 aa).

Residues 1-21 (MTMFASLTSKMLSVSTSDHAS) are Cytoplasmic-facing. A helical transmembrane segment spans residues 22–42 (VVSLNLFVALLCACIVIGHLL). Over 43–47 (EENRW) the chain is Vacuolar. Residues 48–68 (MNESITALLIGLGTGVVILLI) form a helical membrane-spanning segment. The Cytoplasmic portion of the chain corresponds to 69 to 75 (SRGKNSH). Positions 76-96 (LLVFSEDLFFIYLLPPIIFNA) form an intramembrane region, helical. Residues 97–111 (GFQVKKKQFFRNFVT) lie on the Cytoplasmic side of the membrane. The chain crosses the membrane as a helical span at residues 112–132 (IMAFGAIGTVVSCTIISLGAI). Residues 133–148 (QFFKKLDIGTFDLGDF) are Vacuolar-facing. Intramembrane regions (helical) lie at residues 149-168 (LAIG…QVLN) and 174-194 (LLYS…VVLF). The Vacuolar portion of the chain corresponds to 195–218 (NAIQSFDLTHLNHEAAFQFLGNFF). The helical transmembrane segment at 219 to 239 (YLFLLSTGLGVATGLISAYVI) threads the bilayer. Topologically, residues 240–264 (KKLYFGRHSTDREVALMMLMAYLSY) are cytoplasmic. A helical transmembrane segment spans residues 265–285 (MLAELFALSGILTVFFCGIVM). Over 286 to 304 (SHYTWHNVTESSRITTKHA) the chain is Vacuolar. Asn292 is a glycosylation site (N-linked (GlcNAc...) asparagine). Residues 305 to 325 (FATLSFLAETFIFLYVGMDAL) form a helical membrane-spanning segment. Topologically, residues 326-344 (DIEKWRFVSDSPGTSVAVS) are cytoplasmic. Residues 345–365 (SILMGLVMLGRAAFVFPLSFL) traverse the membrane as a helical segment. Residues 366-381 (SNLAKKHQSEKISIKQ) are Vacuolar-facing. A helical transmembrane segment spans residues 382–402 (QVVIWWAGLMRGAVSMALAYN). The Cytoplasmic segment spans residues 403 to 415 (KFTRSGHTELRGN). The chain crosses the membrane as a helical span at residues 416-436 (AIMITSTITVCLFSTMVFGML). Over 437–546 (TKPLIRYLMP…ERSSHDLSKP (110 aa)) the chain is Vacuolar.

Belongs to the monovalent cation:proton antiporter 1 (CPA1) transporter (TC 2.A.36) family. In terms of tissue distribution, expressed in roots and shoots.

It localises to the vacuole membrane. It catalyses the reaction Na(+)(in) + H(+)(out) = Na(+)(out) + H(+)(in). It carries out the reaction K(+)(in) + H(+)(out) = K(+)(out) + H(+)(in). Its function is as follows. Acts in low affinity electroneutral exchange of protons for cations such as Na(+) or K(+) across membranes. May also exchange Li(+) and Cs(+) with a lower affinity. Involved in vacuolar ion compartmentalization necessary for cell volume regulation and cytoplasmic Na(+) detoxification. This chain is Sodium/hydrogen exchanger 2 (NHX2), found in Arabidopsis thaliana (Mouse-ear cress).